The sequence spans 138 residues: Large ribosomal subunit protein uL14 (138 aa).

Belongs to the universal ribosomal protein uL14 family. As to quaternary structure, part of the 50S ribosomal subunit. Forms a cluster with proteins L3 and L24e, part of which may contact the 16S rRNA in 2 intersubunit bridges. Contacts initiation factor aIF-6.

It is found in the cytoplasm. Binds to 23S rRNA. Forms part of two intersubunit bridges in the 70S ribosome. The sequence is that of Large ribosomal subunit protein uL14 from Saccharolobus solfataricus (strain ATCC 35092 / DSM 1617 / JCM 11322 / P2) (Sulfolobus solfataricus).